The following is a 345-amino-acid chain: Probable galacturonosyltransferase-like 3 (345 aa).

At 1-7 (MSSLRLR) the chain is on the cytoplasmic side. The chain crosses the membrane as a helical; Signal-anchor for type II membrane protein span at residues 8–28 (LCLLLLLPITISCVTVTLTDL). Residues 29–345 (PAFREAPAFR…FRYSPLISDS (317 aa)) are Lumenal-facing. Asn-197 is a glycosylation site (N-linked (GlcNAc...) asparagine).

It belongs to the glycosyltransferase 8 family.

The protein localises to the golgi apparatus membrane. Its pathway is glycan metabolism; pectin biosynthesis. Its function is as follows. May be involved in pectin and/or xylans biosynthesis in cell walls. The polypeptide is Probable galacturonosyltransferase-like 3 (GATL3) (Arabidopsis thaliana (Mouse-ear cress)).